A 196-amino-acid polypeptide reads, in one-letter code: Imidazoleglycerol-phosphate dehydratase (196 aa).

This sequence belongs to the imidazoleglycerol-phosphate dehydratase family.

The protein resides in the cytoplasm. It carries out the reaction D-erythro-1-(imidazol-4-yl)glycerol 3-phosphate = 3-(imidazol-4-yl)-2-oxopropyl phosphate + H2O. It functions in the pathway amino-acid biosynthesis; L-histidine biosynthesis; L-histidine from 5-phospho-alpha-D-ribose 1-diphosphate: step 6/9. The sequence is that of Imidazoleglycerol-phosphate dehydratase from Clostridium botulinum (strain Okra / Type B1).